Here is a 347-residue protein sequence, read N- to C-terminus: Haptoglobin (347 aa).

The N-terminal stretch at 1-18 (MRALGAVVTLLLWGQLFA) is a signal peptide. The region spanning 31–88 (DSCPKPPEIANGYVEHLVRYRCRQFYKLQTEGDGIYTLNSEKQWVNPAAGDKLPKCEA) is the Sushi domain. 4 disulfide bridges follow: Cys52–Cys86, Cys90–Cys207, Cys250–Cys281, and Cys292–Cys322. A Peptidase S1 domain is found at 103–345 (IIGGSMDAKG…LKDWVQETMA (243 aa)). Asn148 and Asn152 each carry an N-linked (GlcNAc...) asparagine glycan. Residues 259 to 264 (VPEKKG) are interaction with CD163.

Belongs to the peptidase S1 family. In terms of assembly, tetramer of two alpha and two beta chains; disulfide-linked. The hemoglobin/haptoglobin complex is composed of a haptoglobin dimer bound to two hemoglobin alpha-beta dimers. Interacts with CD163. Interacts with ERGIC3. Expressed by the liver and secreted in plasma.

It is found in the secreted. As a result of hemolysis, hemoglobin is found to accumulate in the kidney and is secreted in the urine. Haptoglobin captures, and combines with free plasma hemoglobin to allow hepatic recycling of heme iron and to prevent kidney damage. Haptoglobin also acts as an antioxidant, has antibacterial activity and plays a role in modulating many aspects of the acute phase response. Hemoglobin/haptoglobin complexes are rapidly cleared by the macrophage CD163 scavenger receptor expressed on the surface of liver Kupfer cells through an endocytic lysosomal degradation pathway. This is Haptoglobin (Hp) from Rattus norvegicus (Rat).